The primary structure comprises 1131 residues: Plasma membrane ATPase (1131 aa).

The next 6 membrane-spanning stretches (helical) occupy residues 77–97 (PVLV…EAAA), 98–118 (IISI…LLLI), 151–171 (GAIV…LIRL), 231–251 (AVVY…LISG), 265–285 (MSAI…AVQF), and 305–325 (MLVV…SVTL). Asp357 serves as the catalytic 4-aspartylphosphate intermediate. Asp615 and Asp619 together coordinate Mg(2+). The next 5 membrane-spanning stretches (helical) occupy residues 642-662 (AADI…VIGA), 689-709 (LITV…MAVF), 733-753 (ITNI…STWA), 884-904 (LAFF…LGGF), and 946-966 (VIGC…WYVL). The span at 994–1010 (KRSLDRRSKDDIGDKEF) shows a compositional bias: basic and acidic residues. 2 disordered regions span residues 994 to 1023 (KRSL…NYSN) and 1067 to 1131 (RRSM…TIRE). Over residues 1089–1100 (SRTSNTLSTGSK) the composition is skewed to polar residues. A compositionally biased stretch (basic and acidic residues) spans 1118-1131 (IKPDKYDFASTIRE).

The protein belongs to the cation transport ATPase (P-type) (TC 3.A.3) family. Type IIIA subfamily.

The protein localises to the cell membrane. The catalysed reaction is ATP + H2O + H(+)(in) = ADP + phosphate + 2 H(+)(out). The plasma membrane ATPase of plants and fungi is a hydrogen ion pump. The proton gradient it generates drives the active transport of nutrients by H(+)-symport. The resulting external acidification and/or internal alkinization may mediate growth responses. This is Plasma membrane ATPase (PMA1) from Dunaliella bioculata (Green alga).